A 484-amino-acid polypeptide reads, in one-letter code: Ribosomal RNA small subunit methyltransferase F (484 aa).

S-adenosyl-L-methionine contacts are provided by residues 126-132, E150, D177, and D195; that span reads AAAPGSK. The Nucleophile role is filled by C248.

The protein belongs to the class I-like SAM-binding methyltransferase superfamily. RsmB/NOP family.

It localises to the cytoplasm. It catalyses the reaction cytidine(1407) in 16S rRNA + S-adenosyl-L-methionine = 5-methylcytidine(1407) in 16S rRNA + S-adenosyl-L-homocysteine + H(+). Specifically methylates the cytosine at position 1407 (m5C1407) of 16S rRNA. The protein is Ribosomal RNA small subunit methyltransferase F of Pectobacterium carotovorum subsp. carotovorum (strain PC1).